Reading from the N-terminus, the 1563-residue chain is MSVRRFLSTSARALLFTAALLPSLTSGLPSGNVRILQKGMEPEDYLSSASQNEVPHDISLPKTELADPNFLVDDMPTLLGRDAAVDPSMFTSTFTVKNGNDANYITASPVSNDASMTAISTFTSGKEASYAIQASPSTFLPDSTTTSGSQVSNAVEASSTFVADTTSTSCNPATVLIVTTSGSTSTSCPPPTTILIVTVPTTTTTTTVGYPGSVTTTLTGTPSNGTVIDTVEVPTTTNYGYTTITTGYTGSTTLTTTVPHSGNETGPTTVYVETPYPTTVTTTTTVGYPGSVTTTLTGAPSNGTVIDTVEVPTTTNYGYTTVTTGYTGSTTLTTTVPHSGNETGPTTVYVETPYPTTVTTTTTVGYPGSVTTTLTGAPSNGTVIDTVEVPTTTNYGYTTVTTGYTGSTTLTTTVPHSGNETGPTTVYVETPYPTTVTTTTTVGYPGSVTTTLTGAPSNGTVIDTVEIPTTTNYGYTTITTGYTGSTTLTTTVPHSGNETGPTTVYVETPYPTTVTTTTTVGYPGSVTTTLTGAPSNGTVIDTVEVPTTTNYGYTTITTGYTGSTTLTTTVPHSGNETGPTTVYVETPYPTTVTTTTTVGYPGSVTTTLTGAPSNGTVIDTVEVPTTTNYGYTTVTTGYTGSTTLTTTVPHSGNETGPTTVYVETPYPTTVTTTTTVGYSGSVTTTLTGSGSNSIVTETVDVPTTTSVNYGYTTITTGWTGSTTLTSIVTHSGSETGPTTVYIETPSVSATTTTTTIGYSGSLTTTLTGSSGPVVTNTVEIPYGNSSYIIPTTIVTGTVTTVTTGYTGTETSTVTVIPTGTTGTTTVVIQTPTTVTATETDIVTVTTGYTGTETSTVTVTPTGTSTGTTTVVIQTPTTVTATETDIVTVTTGYTGTETSTVTVTPTGTSTGTTTVVIQTPTTVTATETDIVTVTTGYTGTETSTVTVTPTGTSTGTTTVVIQTPTTVTATETDIVTVTTGYTGTETSTVTVTPTGTSTGTTTVVIQTPTTVTATETDIVTVTTGYTGTETSTVTVTPTGTSTGTTTVVIQTPTTVTATETDIVTVTTGYTGTETSTVTVTPTGTSTGTTTVVIQTPTTVTATETDIVTVTTGYTGTETSTVTVTPTGTATGTTTVVINTPTTTGSEVLPTTGATGTAGTETQLTTATEVQPTTGATGTAGTETQVTTGTETQATTATETQATTATEVQTTTGATGTAGTETQATTATEVQPTTGATGTAGTETQVTTATEVQPTTGATGTAGTETQVTTGTETQATTATETQATTATEVQTTTGATGTAGTETQATTATEVQPTTGATGTAGTETQVTTATEVQPTTGATGTAGTETQVTTGTETQATTATETQATTATEVQTTTGATGTAGTETQVTTATEVQPTTAVTETSSSGYYTTIVSSTVVSTVVPGSTVYPVTHVTTTTGVSGESSAFTYTTSSTQYEPSTVVTTSYYTTSVYTSAPATETVSSTEAPESSTVTSNPIYQGSGTSTWSTVRQWNGSATYNYTYYTTGGFTGGNNTNVTGLYPSSAGANKPIAYLTFVSLFVYIVTLI.

An N-terminal signal peptide occupies residues Met1–Gly27. Repeat copies occupy residues Thr203–Val280, Thr281–Val358, Thr359–Val436, Thr437–Val514, Thr515–Val592, Thr593–Val670, Thr671–Thr750, Thr751–Thr825, Val826–Thr869, Val870–Thr913, Val914–Thr957, Val958–Thr1001, Val1002–Thr1045, Val1046–Thr1089, Val1090–Thr1133, Val1134–Thr1140, Thr1141–Leu1162, Thr1163–Val1184, Thr1185–Ala1200, Thr1201–Gln1221, Thr1223–Val1244, Thr1245–Val1266, Thr1267–Ala1282, Thr1283–Ala1304, Thr1305–Val1326, Thr1327–Val1348, Thr1349–Ala1364, Thr1365–Val1386, and Thr1387–Ala1397. An 8 X 78 AA approximate tandem repeats region spans residues Thr203–Thr825. N-linked (GlcNAc...) asparagine glycans are attached at residues Asn224, Asn263, Asn302, Asn341, Asn380, Asn419, Asn458, Asn497, Asn536, Asn575, Asn614, and Asn653. N-linked (GlcNAc...) asparagine glycosylation occurs at Asn784. The interval Val826–Thr1140 is 8 X 44 AA approximate tandem repeats. Residues Val1135–Gln1393 form a disordered region. The 13 X 22 AA approximate tandem repeats stretch occupies residues Thr1141–Ala1397. N-linked (GlcNAc...) asparagine glycosylation is found at Asn1510, Asn1516, Asn1529, and Asn1532. Ser1539 carries GPI-anchor amidated serine lipidation. A propeptide spans Ser1540 to Ile1563 (removed in mature form).

The protein belongs to the mam3/map4 family.

The protein localises to the cell membrane. In terms of biological role, galactose-specific adhesion protein essential for non-sexual flocculation and filamentous growth. Required for adhesion and filamentous growth through recognition of galactose residues on cell surface glycoconjugates. Induces flocculation when overexpressed. The protein is Galactose-specific cell agglutination protein gsf2 of Schizosaccharomyces pombe (strain 972 / ATCC 24843) (Fission yeast).